We begin with the raw amino-acid sequence, 433 residues long: Enolase (433 aa).

Gln-167 provides a ligand contact to (2R)-2-phosphoglycerate. Glu-209 functions as the Proton donor in the catalytic mechanism. Positions 246, 291, and 318 each coordinate Mg(2+). Positions 343, 372, 373, and 394 each coordinate (2R)-2-phosphoglycerate. Lys-343 acts as the Proton acceptor in catalysis.

It belongs to the enolase family. Component of the RNA degradosome, a multiprotein complex involved in RNA processing and mRNA degradation. Requires Mg(2+) as cofactor.

It is found in the cytoplasm. The protein resides in the secreted. The protein localises to the cell surface. It carries out the reaction (2R)-2-phosphoglycerate = phosphoenolpyruvate + H2O. It functions in the pathway carbohydrate degradation; glycolysis; pyruvate from D-glyceraldehyde 3-phosphate: step 4/5. Catalyzes the reversible conversion of 2-phosphoglycerate (2-PG) into phosphoenolpyruvate (PEP). It is essential for the degradation of carbohydrates via glycolysis. In Shewanella piezotolerans (strain WP3 / JCM 13877), this protein is Enolase.